A 411-amino-acid polypeptide reads, in one-letter code: Glucose-1-phosphate adenylyltransferase (411 aa).

Residues Gly-162, 177 to 178 (EK), and Ser-195 contribute to the alpha-D-glucose 1-phosphate site.

The protein belongs to the bacterial/plant glucose-1-phosphate adenylyltransferase family. In terms of assembly, homotetramer.

It carries out the reaction alpha-D-glucose 1-phosphate + ATP + H(+) = ADP-alpha-D-glucose + diphosphate. It participates in glycan biosynthesis; glycogen biosynthesis. Its function is as follows. Involved in the biosynthesis of ADP-glucose, a building block required for the elongation reactions to produce glycogen. Catalyzes the reaction between ATP and alpha-D-glucose 1-phosphate (G1P) to produce pyrophosphate and ADP-Glc. This is Glucose-1-phosphate adenylyltransferase from Thermodesulfovibrio yellowstonii (strain ATCC 51303 / DSM 11347 / YP87).